A 714-amino-acid polypeptide reads, in one-letter code: Fatty acid oxidation complex subunit alpha (714 aa).

The tract at residues 1–190 (MEMTSAFTLN…KLGLVDDVVP (190 aa)) is enoyl-CoA hydratase. The interval 306 to 714 (APLNSVGILG…FWKTTATDLQ (409 aa)) is 3-hydroxyacyl-CoA dehydrogenase.

The protein in the N-terminal section; belongs to the enoyl-CoA hydratase/isomerase family. It in the central section; belongs to the 3-hydroxyacyl-CoA dehydrogenase family. Heterotetramer of two alpha chains (FadJ) and two beta chains (FadI).

Its subcellular location is the cytoplasm. It carries out the reaction a (3S)-3-hydroxyacyl-CoA = a (2E)-enoyl-CoA + H2O. The catalysed reaction is a 4-saturated-(3S)-3-hydroxyacyl-CoA = a (3E)-enoyl-CoA + H2O. It catalyses the reaction a (3S)-3-hydroxyacyl-CoA + NAD(+) = a 3-oxoacyl-CoA + NADH + H(+). The enzyme catalyses (3S)-3-hydroxybutanoyl-CoA = (3R)-3-hydroxybutanoyl-CoA. It functions in the pathway lipid metabolism; fatty acid beta-oxidation. In terms of biological role, catalyzes the formation of a hydroxyacyl-CoA by addition of water on enoyl-CoA. Also exhibits 3-hydroxyacyl-CoA epimerase and 3-hydroxyacyl-CoA dehydrogenase activities. The polypeptide is Fatty acid oxidation complex subunit alpha (Escherichia coli (strain 55989 / EAEC)).